Reading from the N-terminus, the 250-residue chain is Ribonuclease PH (250 aa).

Residues Arg86 and 124-126 (GTR) each bind phosphate.

It belongs to the RNase PH family. In terms of assembly, homohexameric ring arranged as a trimer of dimers.

It catalyses the reaction tRNA(n+1) + phosphate = tRNA(n) + a ribonucleoside 5'-diphosphate. Functionally, phosphorolytic 3'-5' exoribonuclease that plays an important role in tRNA 3'-end maturation. Removes nucleotide residues following the 3'-CCA terminus of tRNAs; can also add nucleotides to the ends of RNA molecules by using nucleoside diphosphates as substrates, but this may not be physiologically important. Probably plays a role in initiation of 16S rRNA degradation (leading to ribosome degradation) during starvation. This chain is Ribonuclease PH, found in Shouchella clausii (strain KSM-K16) (Alkalihalobacillus clausii).